Here is a 235-residue protein sequence, read N- to C-terminus: Phosphoribosylaminoimidazole-succinocarboxamide synthase (235 aa).

The protein belongs to the SAICAR synthetase family.

It carries out the reaction 5-amino-1-(5-phospho-D-ribosyl)imidazole-4-carboxylate + L-aspartate + ATP = (2S)-2-[5-amino-1-(5-phospho-beta-D-ribosyl)imidazole-4-carboxamido]succinate + ADP + phosphate + 2 H(+). Its pathway is purine metabolism; IMP biosynthesis via de novo pathway; 5-amino-1-(5-phospho-D-ribosyl)imidazole-4-carboxamide from 5-amino-1-(5-phospho-D-ribosyl)imidazole-4-carboxylate: step 1/2. This is Phosphoribosylaminoimidazole-succinocarboxamide synthase from Streptococcus thermophilus (strain CNRZ 1066).